A 173-amino-acid polypeptide reads, in one-letter code: Crossover junction endodeoxyribonuclease RuvC (173 aa).

Residues aspartate 8, glutamate 67, and aspartate 139 contribute to the active site. Mg(2+) contacts are provided by aspartate 8, glutamate 67, and aspartate 139.

Belongs to the RuvC family. Homodimer which binds Holliday junction (HJ) DNA. The HJ becomes 2-fold symmetrical on binding to RuvC with unstacked arms; it has a different conformation from HJ DNA in complex with RuvA. In the full resolvosome a probable DNA-RuvA(4)-RuvB(12)-RuvC(2) complex forms which resolves the HJ. It depends on Mg(2+) as a cofactor.

The protein resides in the cytoplasm. It carries out the reaction Endonucleolytic cleavage at a junction such as a reciprocal single-stranded crossover between two homologous DNA duplexes (Holliday junction).. The RuvA-RuvB-RuvC complex processes Holliday junction (HJ) DNA during genetic recombination and DNA repair. Endonuclease that resolves HJ intermediates. Cleaves cruciform DNA by making single-stranded nicks across the HJ at symmetrical positions within the homologous arms, yielding a 5'-phosphate and a 3'-hydroxyl group; requires a central core of homology in the junction. The consensus cleavage sequence is 5'-(A/T)TT(C/G)-3'. Cleavage occurs on the 3'-side of the TT dinucleotide at the point of strand exchange. HJ branch migration catalyzed by RuvA-RuvB allows RuvC to scan DNA until it finds its consensus sequence, where it cleaves and resolves the cruciform DNA. The sequence is that of Crossover junction endodeoxyribonuclease RuvC from Salmonella agona (strain SL483).